A 154-amino-acid chain; its full sequence is Crossover junction endodeoxyribonuclease RuvC (154 aa).

Catalysis depends on residues Asp-7, Glu-67, and Asp-139. Mg(2+) contacts are provided by Asp-7, Glu-67, and Asp-139.

Belongs to the RuvC family. In terms of assembly, homodimer which binds Holliday junction (HJ) DNA. The HJ becomes 2-fold symmetrical on binding to RuvC with unstacked arms; it has a different conformation from HJ DNA in complex with RuvA. In the full resolvosome a probable DNA-RuvA(4)-RuvB(12)-RuvC(2) complex forms which resolves the HJ. The cofactor is Mg(2+).

The protein localises to the cytoplasm. The catalysed reaction is Endonucleolytic cleavage at a junction such as a reciprocal single-stranded crossover between two homologous DNA duplexes (Holliday junction).. The RuvA-RuvB-RuvC complex processes Holliday junction (HJ) DNA during genetic recombination and DNA repair. Endonuclease that resolves HJ intermediates. Cleaves cruciform DNA by making single-stranded nicks across the HJ at symmetrical positions within the homologous arms, yielding a 5'-phosphate and a 3'-hydroxyl group; requires a central core of homology in the junction. The consensus cleavage sequence is 5'-(A/T)TT(C/G)-3'. Cleavage occurs on the 3'-side of the TT dinucleotide at the point of strand exchange. HJ branch migration catalyzed by RuvA-RuvB allows RuvC to scan DNA until it finds its consensus sequence, where it cleaves and resolves the cruciform DNA. The sequence is that of Crossover junction endodeoxyribonuclease RuvC from Prochlorococcus marinus (strain NATL1A).